The chain runs to 181 residues: Transcription antitermination protein NusB (181 aa).

A disordered region spans residues 1 to 36 (MTEDNNKAAGAKPRPARQVRTGLTSTGARKASAKSN).

This sequence belongs to the NusB family.

Its function is as follows. Involved in transcription antitermination. Required for transcription of ribosomal RNA (rRNA) genes. Binds specifically to the boxA antiterminator sequence of the ribosomal RNA (rrn) operons. The protein is Transcription antitermination protein NusB of Variovorax paradoxus (strain S110).